A 435-amino-acid polypeptide reads, in one-letter code: Glutamyl-tRNA reductase (435 aa).

Residues 49–52, serine 114, 119–121, and glutamine 125 each bind substrate; these read TCNR and EPQ. Cysteine 50 serves as the catalytic Nucleophile. 204-209 contacts NADP(+); that stretch reads GAGETI.

The protein belongs to the glutamyl-tRNA reductase family. Homodimer.

It carries out the reaction (S)-4-amino-5-oxopentanoate + tRNA(Glu) + NADP(+) = L-glutamyl-tRNA(Glu) + NADPH + H(+). It functions in the pathway porphyrin-containing compound metabolism; protoporphyrin-IX biosynthesis; 5-aminolevulinate from L-glutamyl-tRNA(Glu): step 1/2. In terms of biological role, catalyzes the NADPH-dependent reduction of glutamyl-tRNA(Glu) to glutamate 1-semialdehyde (GSA). This is Glutamyl-tRNA reductase from Actinobacillus succinogenes (strain ATCC 55618 / DSM 22257 / CCUG 43843 / 130Z).